Consider the following 276-residue polypeptide: Small ribosomal subunit protein uS3 (276 aa).

In terms of domain architecture, KH type-2 spans 39 to 110 (IRRETMKFLK…KINIKIKEIK (72 aa)).

Belongs to the universal ribosomal protein uS3 family. As to quaternary structure, part of the 30S ribosomal subunit. Forms a tight complex with proteins S10 and S14.

Functionally, binds the lower part of the 30S subunit head. Binds mRNA in the 70S ribosome, positioning it for translation. The protein is Small ribosomal subunit protein uS3 of Borrelia turicatae (strain 91E135).